Consider the following 465-residue polypeptide: MSNVTVCARFRPRSSKEMRDPSRDGVCARPIDAETFVFQDDKEDEFTFSLDRVFYEDSTQAAVYEFLALPIMRDAVNGINGTIITYGQTGAGKTYSMEGPGIQDCDEHNKGLLPRVVHGMFEQISSSNDIARYTVKLSMVEIYMEKVRDLLDLSKANIQIKENKTQGILLSGVTEVPVSDSVEALQHLCTGLANRAVGETQMNMSSSRSHCAYLFTIQQDSVKDKRVKTGKLILVDLAGSEKADKTGAEGRVLEEAKTINKSLSALGNVINALTSGPSSKGNHIPYRDSKLTRILQDALGGNSRMALLCCCSPSTLNASETLSTLRFGMRAKHIKASPRASEVKSAKAQEEPSSVTKDEKCGRILEKMKERMSNEDIKMLEDVFIQEGIIFSLDSMAEVETVYEDIVSKTIQSLQQAVDELQQKVKKLEAENIGIQEQALRNHEPGSVGKMSRFISSWYASFFTS.

The Kinesin motor domain maps to 3-334; the sequence is NVTVCARFRP…LRFGMRAKHI (332 aa). 87-94 provides a ligand contact to ATP; it reads GQTGAGKT. The segment at 338–358 is disordered; that stretch reads PRASEVKSAKAQEEPSSVTKD. Over residues 341-358 the composition is skewed to basic and acidic residues; sequence SEVKSAKAQEEPSSVTKD. Residues 402 to 444 adopt a coiled-coil conformation; it reads VYEDIVSKTIQSLQQAVDELQQKVKKLEAENIGIQEQALRNHE.

Belongs to the TRAFAC class myosin-kinesin ATPase superfamily. Kinesin family. KIN-1 subfamily. As to quaternary structure, homodimer. Interacts with WIP1 and WIP2. In terms of tissue distribution, specifically expressed in ovules and anthers.

Kinesin-like motor protein that promotes synapsis and is required for proper crossover distribution in meiosis. Plays a role in the nuclear division cycles during megagametogenesis. The polypeptide is Kinesin-like protein KIN-1 (Arabidopsis thaliana (Mouse-ear cress)).